Consider the following 278-residue polypeptide: Proline-rich 28 kDa antigen homolog (278 aa).

Positions 1 to 28 are cleaved as a signal peptide; the sequence is MIQSTQTWRVLAGGLAATAMGVTVFAGG.

It to M.tuberculosis Rv0040c.

The sequence is that of Proline-rich 28 kDa antigen homolog from Mycobacterium leprae (strain TN).